Here is a 193-residue protein sequence, read N- to C-terminus: 3-isopropylmalate dehydratase small subunit (193 aa).

It belongs to the LeuD family. LeuD type 1 subfamily. As to quaternary structure, heterodimer of LeuC and LeuD.

The enzyme catalyses (2R,3S)-3-isopropylmalate = (2S)-2-isopropylmalate. It participates in amino-acid biosynthesis; L-leucine biosynthesis; L-leucine from 3-methyl-2-oxobutanoate: step 2/4. Catalyzes the isomerization between 2-isopropylmalate and 3-isopropylmalate, via the formation of 2-isopropylmaleate. This is 3-isopropylmalate dehydratase small subunit from Bacillus cereus (strain ZK / E33L).